Here is a 171-residue protein sequence, read N- to C-terminus: 3-hydroxydecanoyl-[acyl-carrier-protein] dehydratase (171 aa).

Residue His-71 is part of the active site.

It belongs to the thioester dehydratase family. FabA subfamily. In terms of assembly, homodimer.

It is found in the cytoplasm. The enzyme catalyses a (3R)-hydroxyacyl-[ACP] = a (2E)-enoyl-[ACP] + H2O. The catalysed reaction is (3R)-hydroxydecanoyl-[ACP] = (2E)-decenoyl-[ACP] + H2O. It catalyses the reaction (2E)-decenoyl-[ACP] = (3Z)-decenoyl-[ACP]. Its pathway is lipid metabolism; fatty acid biosynthesis. Its function is as follows. Necessary for the introduction of cis unsaturation into fatty acids. Catalyzes the dehydration of (3R)-3-hydroxydecanoyl-ACP to E-(2)-decenoyl-ACP and then its isomerization to Z-(3)-decenoyl-ACP. Can catalyze the dehydratase reaction for beta-hydroxyacyl-ACPs with saturated chain lengths up to 16:0, being most active on intermediate chain length. The protein is 3-hydroxydecanoyl-[acyl-carrier-protein] dehydratase of Sinorhizobium medicae (strain WSM419) (Ensifer medicae).